A 269-amino-acid chain; its full sequence is Tryptophan synthase alpha chain (269 aa).

Active-site proton acceptor residues include E49 and D60.

It belongs to the TrpA family. Tetramer of two alpha and two beta chains.

It catalyses the reaction (1S,2R)-1-C-(indol-3-yl)glycerol 3-phosphate + L-serine = D-glyceraldehyde 3-phosphate + L-tryptophan + H2O. It functions in the pathway amino-acid biosynthesis; L-tryptophan biosynthesis; L-tryptophan from chorismate: step 5/5. The alpha subunit is responsible for the aldol cleavage of indoleglycerol phosphate to indole and glyceraldehyde 3-phosphate. The protein is Tryptophan synthase alpha chain of Pseudomonas syringae pv. syringae.